The primary structure comprises 349 residues: Protein RecA (349 aa).

Residue G65 to T72 coordinates ATP.

It belongs to the RecA family.

The protein localises to the cytoplasm. Its function is as follows. Can catalyze the hydrolysis of ATP in the presence of single-stranded DNA, the ATP-dependent uptake of single-stranded DNA by duplex DNA, and the ATP-dependent hybridization of homologous single-stranded DNAs. It interacts with LexA causing its activation and leading to its autocatalytic cleavage. This chain is Protein RecA, found in Clostridium acetobutylicum (strain ATCC 824 / DSM 792 / JCM 1419 / IAM 19013 / LMG 5710 / NBRC 13948 / NRRL B-527 / VKM B-1787 / 2291 / W).